We begin with the raw amino-acid sequence, 277 residues long: MAVKKFRPITPSLRQMTVATFEEITTDKPEKSLLVSLNKKAGRNSQGKITVRHRGGGAKRKYRIIDFKRTKDGIPAKVASIEYDPNRTAYIALVVYADGEKRYIIAPVGLKVGDVVMSGVDADIKVGNALPLKNIPVGTVIHNVELQAGKGAQLVRAAGSSAQLMAKEGKYAILRLPSGEMRYVRIECRAAIGTVSNVTNDIINIGKAGRKRHLGFRPTVRGSVMNPNDHPHGGGEGKSPIGHPSPLTPWGKPALGYKTRKNKKYSDGMIIKRRGQK.

Residues 218 to 277 (PTVRGSVMNPNDHPHGGGEGKSPIGHPSPLTPWGKPALGYKTRKNKKYSDGMIIKRRGQK) are disordered.

The protein belongs to the universal ribosomal protein uL2 family. Part of the 50S ribosomal subunit. Forms a bridge to the 30S subunit in the 70S ribosome.

Its function is as follows. One of the primary rRNA binding proteins. Required for association of the 30S and 50S subunits to form the 70S ribosome, for tRNA binding and peptide bond formation. It has been suggested to have peptidyltransferase activity; this is somewhat controversial. Makes several contacts with the 16S rRNA in the 70S ribosome. The sequence is that of Large ribosomal subunit protein uL2 from Clostridium novyi (strain NT).